A 591-amino-acid chain; its full sequence is Trihelix transcription factor PTL (591 aa).

The segment at 1 to 32 (MDQDQHPQYGIPELRQLMKGGGRTTTTTPSTS) is disordered. The Myb-like 1 domain occupies 118–177 (GRWPRQETLTLLEIRSRLDHKFKEANQKGPLWDEVSRIMSEEHGYQRSGKKCREKFENLY). The tract at residues 380–410 (CSSPEERTNGNNEIRNNSETQNENGSDQTMT) is disordered. The segment covering 388 to 410 (NGNNEIRNNSETQNENGSDQTMT) has biased composition (polar residues). The Myb-like 2 domain maps to 422-479 (WGEQEILKLMEIRTSMDSTFQEILGGCSDEFLWEEIAAKLIQLGFDQRSALLCKEKWE). Positions 491–551 (QINKKRKDNS…SNANANANVT (61 aa)) are disordered. Positions 515-534 (IYNNRESGYNDNDPHQINEQ) are enriched in polar residues. The span at 535 to 551 (GNVGSSTSNANANANVT) shows a compositional bias: low complexity.

In terms of assembly, interacts with KIN10. Confined to flowers, at low levels. Also present in 7-days-old seedlings. Barely detectable in other tissues such as young seedlings, roots, stems, leaves and siliques. Expressed in flower primordia, more precisely between newly arisen sepal primordia and also at the basal margins of developing sepals.

It is found in the nucleus. Its function is as follows. Transcription factor that prevents growth. Regulates perianth architecture in flower, mostly in the second whorl, probably by suppressing growth between initiating sepals, ensuring that they remain separate, and by modulating organ shapes. Required for the establishment of auxin flux. The chain is Trihelix transcription factor PTL (PTL) from Arabidopsis thaliana (Mouse-ear cress).